We begin with the raw amino-acid sequence, 262 residues long: Shikimate dehydrogenase (NADP(+)) (262 aa).

Shikimate contacts are provided by residues Ser-15–Ser-17 and Thr-62. Lys-66 acts as the Proton acceptor in catalysis. Glu-78 provides a ligand contact to NADP(+). Shikimate-binding residues include Asn-87 and Asp-102. Residues Gly-126–Ala-130, Asn-150–Arg-155, and Met-214 contribute to the NADP(+) site. Tyr-216 is a shikimate binding site. Position 236 (Gly-236) interacts with NADP(+).

It belongs to the shikimate dehydrogenase family. Homodimer.

The enzyme catalyses shikimate + NADP(+) = 3-dehydroshikimate + NADPH + H(+). It participates in metabolic intermediate biosynthesis; chorismate biosynthesis; chorismate from D-erythrose 4-phosphate and phosphoenolpyruvate: step 4/7. In terms of biological role, involved in the biosynthesis of the chorismate, which leads to the biosynthesis of aromatic amino acids. Catalyzes the reversible NADPH linked reduction of 3-dehydroshikimate (DHSA) to yield shikimate (SA). This is Shikimate dehydrogenase (NADP(+)) from Acinetobacter baylyi (strain ATCC 33305 / BD413 / ADP1).